Here is a 221-residue protein sequence, read N- to C-terminus: Uracil-DNA glycosylase 1 (221 aa).

Catalysis depends on aspartate 61, which acts as the Proton acceptor.

The protein belongs to the uracil-DNA glycosylase (UDG) superfamily. UNG family.

The protein localises to the cytoplasm. The catalysed reaction is Hydrolyzes single-stranded DNA or mismatched double-stranded DNA and polynucleotides, releasing free uracil.. Its function is as follows. Excises uracil residues from the DNA which can arise as a result of misincorporation of dUMP residues by DNA polymerase or due to deamination of cytosine. The polypeptide is Uracil-DNA glycosylase 1 (Listeria innocua serovar 6a (strain ATCC BAA-680 / CLIP 11262)).